Consider the following 89-residue polypeptide: Small ribosomal subunit protein uS15 (89 aa).

It belongs to the universal ribosomal protein uS15 family. As to quaternary structure, part of the 30S ribosomal subunit. Forms a bridge to the 50S subunit in the 70S ribosome, contacting the 23S rRNA.

Functionally, one of the primary rRNA binding proteins, it binds directly to 16S rRNA where it helps nucleate assembly of the platform of the 30S subunit by binding and bridging several RNA helices of the 16S rRNA. Forms an intersubunit bridge (bridge B4) with the 23S rRNA of the 50S subunit in the ribosome. In Bacillus pumilus (strain SAFR-032), this protein is Small ribosomal subunit protein uS15.